A 326-amino-acid polypeptide reads, in one-letter code: Vitamin B12 import system permease protein BtuC (326 aa).

Helical transmembrane passes span Trp-15–Glu-35, Leu-61–Phe-81, Pro-88–Gly-108, Leu-112–Leu-132, Leu-146–Phe-166, Gly-184–Ile-204, Gly-240–Ile-260, Val-274–Ala-294, and Glu-302–Leu-322.

The protein belongs to the binding-protein-dependent transport system permease family. FecCD subfamily. As to quaternary structure, the complex is composed of two ATP-binding proteins (BtuD), two transmembrane proteins (BtuC) and a solute-binding protein (BtuF).

The protein resides in the cell inner membrane. Part of the ABC transporter complex BtuCDF involved in vitamin B12 import. Involved in the translocation of the substrate across the membrane. This chain is Vitamin B12 import system permease protein BtuC, found in Escherichia coli (strain SE11).